The following is a 158-amino-acid chain: Large ribosomal subunit protein bL19 (158 aa).

A disordered region spans residues 1–35 (MTADSKDTSMSEDNTETATAIENSSAMVTDVTSKS). Residues 16–35 (ETATAIENSSAMVTDVTSKS) are compositionally biased toward polar residues.

The protein belongs to the bacterial ribosomal protein bL19 family.

Functionally, this protein is located at the 30S-50S ribosomal subunit interface and may play a role in the structure and function of the aminoacyl-tRNA binding site. The chain is Large ribosomal subunit protein bL19 from Prochlorococcus marinus (strain MIT 9313).